We begin with the raw amino-acid sequence, 816 residues long: Phosphatidylinositol 4-kinase beta (816 aa).

Disordered stretches follow at residues 1–30 (MGDT…GSLL), 101–120 (EDEM…RRRR), and 248–318 (AHRK…SFSS). Gly-2 is modified (N-acetylglycine). The interaction with ACBD3 stretch occupies residues 2 to 68 (GDTIVEPAPL…VKLLHGGVAI (67 aa)). Positions 29–242 (LLSVITEGVG…GTKLRKLILS (214 aa)) constitute a PIK helical domain. Ser-258 is subject to Phosphoserine. Thr-263 is subject to Phosphothreonine. Phosphoserine is present on residues Ser-266, Ser-275, Ser-277, Ser-284, and Ser-294. Composition is skewed to polar residues over residues 278–297 (DATA…SNPK) and 306–318 (SSST…SFSS). Residue Ser-428 is modified to Phosphoserine. The residue at position 438 (Thr-438) is a Phosphothreonine. Position 511 is a phosphoserine (Ser-511). Phosphothreonine is present on residues Thr-517 and Thr-519. A PI3K/PI4K catalytic domain is found at 535 to 801 (EPWQEKVRRI…MVDGSMRSIT (267 aa)). A G-loop region spans residues 541-547 (VRRIREG). Positions 668–676 (QVKDRHNGN) are catalytic loop. The interval 687 to 711 (HIDFGFILSSSPRNLGFETSAFKLT) is activation loop.

Belongs to the PI3/PI4-kinase family. Type III PI4K subfamily. As to quaternary structure, interacts with ARF1 and ARF3 in the Golgi complex, but not with ARF4, ARF5 or ARF6. Interacts with NCS1/FREQ in a calcium-independent manner. Interacts with CALN1/CABP8 and CALN2/CABP7; in a calcium-dependent manner; this interaction competes with NCS1/FREQ binding. Interacts with ACBD3. Interacts with ARMH3, YWHAB, YWHAE, YWHAG, YWHAH, YWHAQ, YWHAZ and SFN. Interacts with GGA2 (via VHS domain); the interaction is important for PI4KB location at the Golgi apparatus membrane. Interacts with ATG9A. Requires Mg(2+) as cofactor. It depends on Mn(2+) as a cofactor.

The protein resides in the endomembrane system. The protein localises to the mitochondrion outer membrane. Its subcellular location is the rough endoplasmic reticulum membrane. It localises to the golgi apparatus. It is found in the golgi apparatus membrane. The catalysed reaction is a 1,2-diacyl-sn-glycero-3-phospho-(1D-myo-inositol) + ATP = a 1,2-diacyl-sn-glycero-3-phospho-(1D-myo-inositol 4-phosphate) + ADP + H(+). Its activity is regulated as follows. Inhibited by wortmannin. Increased kinase activity upon interaction with NCS1/FREQ. Phosphorylates phosphatidylinositol (PI) in the first committed step in the production of the second messenger inositol-1,4,5,-trisphosphate (PIP). May regulate Golgi disintegration/reorganization during mitosis, possibly via its phosphorylation. Involved in Golgi-to-plasma membrane trafficking. The sequence is that of Phosphatidylinositol 4-kinase beta (PI4KB) from Bos taurus (Bovine).